The primary structure comprises 327 residues: (-)-delta-cadinene synthase (327 aa).

Mg(2+) is bound by residues Asp84, Asp85, Asn222, Thr226, and Glu230.

This sequence belongs to the terpene synthase family.

The enzyme catalyses (2E,6E)-farnesyl diphosphate = (-)-delta-cadinene + diphosphate. In terms of biological role, catalyzes the conversion of (2E,6E)-farnesyl diphosphate into (-)-delta-cadinene. Cyclization mechanism involves an intermediate nerolidyl diphosphate leading to a helminthogermacradienyl cation. The sequence is that of (-)-delta-cadinene synthase from Streptomyces clavuligerus.